A 163-amino-acid polypeptide reads, in one-letter code: Small ribosomal subunit protein uS5 (163 aa).

The 64-residue stretch at 8–71 (LVEKIVYLNR…ERAKKDMVQI (64 aa)) folds into the S5 DRBM domain.

It belongs to the universal ribosomal protein uS5 family. In terms of assembly, part of the 30S ribosomal subunit. Contacts proteins S4 and S8.

Functionally, with S4 and S12 plays an important role in translational accuracy. Located at the back of the 30S subunit body where it stabilizes the conformation of the head with respect to the body. The chain is Small ribosomal subunit protein uS5 from Nitratidesulfovibrio vulgaris (strain DSM 19637 / Miyazaki F) (Desulfovibrio vulgaris).